A 693-amino-acid polypeptide reads, in one-letter code: TGF-beta-activated kinase 1 and MAP3K7-binding protein 2 (693 aa).

Residues 8-51 (IDFQVLHDLRQKFPEVPEVVVSRCMLQNNNNLDACCAVLSQEST) enclose the CUE domain. A disordered region spans residues 91 to 130 (GREGSRMNGSRTLTHSISDGQLQGGQSNSELFQQEPQTAP). A compositionally biased stretch (polar residues) spans 97–130 (MNGSRTLTHSISDGQLQGGQSNSELFQQEPQTAP). Asymmetric dimethylarginine is present on arginine 173. The tract at residues 219 to 310 (ITTPGGTTRQ…SGSSQSSAHS (92 aa)) is disordered. The span at 220–231 (TTPGGTTRQTQQ) shows a compositional bias: low complexity. The segment covering 232–282 (HSGWVSQFNPMNPQQVYQPSQPGPWTTCPASNPLSHTSSQQPNQQGHQTSH) has biased composition (polar residues). The segment covering 286–310 (PISSPTTSQPPTIHSSGSSQSSAHS) has biased composition (low complexity). Lysine 329 is covalently cross-linked (Glycyl lysine isopeptide (Lys-Gly) (interchain with G-Cter in SUMO)). Residues 330-381 (LEPPQRNNSSKLRSSGPRTSSTSSSVNSQTLNRNQPTVYIAASPPNTDELMS) form a disordered region. Residues 343-359 (SSGPRTSSTSSSVNSQT) show a composition bias toward low complexity. Phosphoserine is present on residues serine 372, serine 450, serine 482, and serine 524. Positions 532 to 619 (YTQALLVHQK…TKEIDLFQAR (88 aa)) form a coiled coil. Residue lysine 562 forms a Glycyl lysine isopeptide (Lys-Gly) (interchain with G-Cter in SUMO) linkage. Serine 582 bears the Phosphoserine mark. A Glycyl lysine isopeptide (Lys-Gly) (interchain with G-Cter in ubiquitin) cross-link involves residue lysine 611. Positions 642 to 663 (PPKPKDQRSIIKTPKTQDTEDD) are disordered. Residues 663–693 (DEGAQWNCTACTFLNHPALIRCEQCEMPRHF) form a RanBP2-type zinc finger. Cysteine 673 is modified ((Microbial infection) S-methylcysteine). Residues 675 to 685 (FLNHPALIRCE) are interaction with polyubiquitin.

Interacts with MAP3K7 and TRAF6. Identified in the TRIKA2 complex composed of MAP3K7, TAB1 and TAB2. Binds 'Lys-63'-linked polyubiquitin chains. Interacts with NCOR1 and HDAC3 to form a ternary complex. Interacts (via C-terminal) with NUMBL (via PTB domain). Interacts (via the C-terminus) with DYNC2I2 (via WD domains). Interacts with RBCK1. Interacts with TRIM5. Interacts with TRIM38 (via B30.2/SPRY domain), leading to its translocation to lysosomes and degradation. Interacts with ASB1; this interaction promotes TAB2 stability. Degraded in a lysosome-dependent manner following interaction with TRIM38. In terms of processing, SUMOylated by TRIM60; leading to inhibition of MAPK/NF-kappaB activation and the innate immune response. Post-translationally, ubiquitinated; following IL1 stimulation or TRAF6 overexpression. Ubiquitination involves RBCK1 leading to proteasomal degradation. Ubiquitinated at Lys-611 by TRIM45 leading to proteasomal degradation. Phosphorylated. In terms of processing, (Microbial infection) Methylated at Cys-673 by enteropathogenic E.coli protein NleE or S.flexneri protein OspZ: methylation disrupts zinc-binding and ability to bind 'Lys-63'-linked ubiquitin, leading to NF-kappa-B inactivation. Widely expressed. In the embryo, expressed in the ventricular trabeculae, endothelial cells of the conotruncal cushions of the outflow tract and in the endothelial cells lining the developing aortic valves.

It is found in the membrane. The protein resides in the endosome membrane. The protein localises to the lysosome membrane. Its subcellular location is the cytoplasm. It localises to the cytosol. In terms of biological role, adapter required to activate the JNK and NF-kappa-B signaling pathways through the specific recognition of 'Lys-63'-linked polyubiquitin chains by its RanBP2-type zinc finger (NZF). Acts as an adapter linking MAP3K7/TAK1 and TRAF6 to 'Lys-63'-linked polyubiquitin chains. The RanBP2-type zinc finger (NZF) specifically recognizes Lys-63'-linked polyubiquitin chains unanchored or anchored to the substrate proteins such as RIPK1/RIP1 and RIPK2: this acts as a scaffold to organize a large signaling complex to promote autophosphorylation of MAP3K7/TAK1, and subsequent activation of I-kappa-B-kinase (IKK) core complex by MAP3K7/TAK1. Also recognizes and binds Lys-63'-linked polyubiquitin chains of heterotypic 'Lys-63'-/'Lys-48'-linked branched ubiquitin chains. Regulates the IL1-mediated translocation of NCOR1 out of the nucleus. Involved in heart development. The protein is TGF-beta-activated kinase 1 and MAP3K7-binding protein 2 of Homo sapiens (Human).